A 264-amino-acid chain; its full sequence is Thymidylate synthase (264 aa).

Position 21 (R21) interacts with dUMP. A (6R)-5,10-methylene-5,6,7,8-tetrahydrofolate-binding site is contributed by H51. 126–127 (RR) provides a ligand contact to dUMP. C146 functions as the Nucleophile in the catalytic mechanism. Residues 166–169 (RSCD), N177, and 207–209 (HLY) contribute to the dUMP site. D169 is a binding site for (6R)-5,10-methylene-5,6,7,8-tetrahydrofolate. A263 is a (6R)-5,10-methylene-5,6,7,8-tetrahydrofolate binding site.

Belongs to the thymidylate synthase family. Bacterial-type ThyA subfamily. As to quaternary structure, homodimer.

It is found in the cytoplasm. The enzyme catalyses dUMP + (6R)-5,10-methylene-5,6,7,8-tetrahydrofolate = 7,8-dihydrofolate + dTMP. Its pathway is pyrimidine metabolism; dTTP biosynthesis. Functionally, catalyzes the reductive methylation of 2'-deoxyuridine-5'-monophosphate (dUMP) to 2'-deoxythymidine-5'-monophosphate (dTMP) while utilizing 5,10-methylenetetrahydrofolate (mTHF) as the methyl donor and reductant in the reaction, yielding dihydrofolate (DHF) as a by-product. This enzymatic reaction provides an intracellular de novo source of dTMP, an essential precursor for DNA biosynthesis. The polypeptide is Thymidylate synthase (Pectobacterium atrosepticum (strain SCRI 1043 / ATCC BAA-672) (Erwinia carotovora subsp. atroseptica)).